A 744-amino-acid polypeptide reads, in one-letter code: MRNFAMLLLLILLLHSLASFPICFARLFPMSLPFTRSKAHQMHFFHPYLNPSVAPTPSPAFSPNPSRIPPLRHKGHHRHRRWHLRRNATAVSPSSHDCQQTCVEPLTSTPFGSPCGCVFPMKVQLLLSVAPFSIFPVTNELEIEVAAGTYLEQSQVKIMGASADSENQGKTVVDINLVPLGEKFDNTTATLIYQRFRHKKVPLNETVFGDYEVTHISYPGIPSSSPNGDVTGDAPGGLPIPINATTFANKSQGIGFRTIAIIALSGFVLILVLVGAISIIVKWKKIGKSSNAVGPALAPSINKRPGAGSMFSSSARSSGSDSLMSSMATCALSVKTFTLSELEKATDRFSAKRVLGEGGFGRVYQGSMEDGTEVAVKLLTRDNQNRDREFIAEVEMLSRLHHRNLVKLIGICIEGRTRCLIYELVHNGSVESHLHEGTLDWDARLKIALGAARGLAYLHEDSNPRVIHRDFKASNVLLEDDFTPKVSDFGLAREATEGSQHISTRVMGTFGYVAPEYAMTGHLLVKSDVYSYGVVLLELLTGRRPVDMSQPSGEENLVTWARPLLANREGLEQLVDPALAGTYNFDDMAKVAAIASMCVHQEVSHRPFMGEVVQALKLIYNDADETCGDYCSQKDSSVPDSADFKGDLAPSDSSWWNLTPRLRYGQASSFITMDYSSGPLEDMENRPHSASSIPRVGGLILPNRSGPLRPMRSRRNFFRLRGSMSEHGGPSSSRHLWSGNGDWL.

The signal sequence occupies residues M1 to S19. Topologically, residues F20–A260 are extracellular. Over residues P59–I68 the composition is skewed to pro residues. Positions P59–H79 are disordered. The segment covering P70–H79 has biased composition (basic residues). 5 N-linked (GlcNAc...) asparagine glycosylation sites follow: N87, N186, N204, N243, and N249. A helical membrane pass occupies residues I261 to V281. Residues K282–L744 are Cytoplasmic-facing. A Protein kinase domain is found at F349–I619. Residues L355–V363 and K377 each bind ATP. Catalysis depends on D470, which acts as the Proton acceptor. Disordered stretches follow at residues E681–S705 and G722–L744.

It belongs to the protein kinase superfamily. Ser/Thr protein kinase family. Autophosphorylated and phosphorylated by ACR4.

The protein localises to the cell membrane. The catalysed reaction is L-seryl-[protein] + ATP = O-phospho-L-seryl-[protein] + ADP + H(+). The enzyme catalyses L-threonyl-[protein] + ATP = O-phospho-L-threonyl-[protein] + ADP + H(+). Its function is as follows. Required during the differentiation of the protoderm into shoots epidermis and cuticle. The protein is Receptor-like serine/threonine-protein kinase ALE2 (ALE2) of Arabidopsis thaliana (Mouse-ear cress).